Reading from the N-terminus, the 422-residue chain is Adenosylhomocysteinase (422 aa).

Substrate contacts are provided by D129 and E154. 155 to 157 (TTT) lines the NAD(+) pocket. Residues K184 and D188 each contribute to the substrate site. Residues N189, 218-223 (GYGWCG), E241, N276, 297-299 (AGH), and N344 each bind NAD(+).

This sequence belongs to the adenosylhomocysteinase family. NAD(+) is required as a cofactor.

The protein resides in the cytoplasm. The enzyme catalyses S-adenosyl-L-homocysteine + H2O = L-homocysteine + adenosine. Its pathway is amino-acid biosynthesis; L-homocysteine biosynthesis; L-homocysteine from S-adenosyl-L-homocysteine: step 1/1. Its function is as follows. May play a key role in the regulation of the intracellular concentration of adenosylhomocysteine. This Pyrococcus abyssi (strain GE5 / Orsay) protein is Adenosylhomocysteinase.